The primary structure comprises 810 residues: Leucine--tRNA ligase (810 aa).

Residues 43-53 (PYPSGTLHIGH) carry the 'HIGH' region motif. The 'KMSKS' region motif lies at 578-582 (KMSKS). Residue lysine 581 coordinates ATP.

The protein belongs to the class-I aminoacyl-tRNA synthetase family.

It is found in the cytoplasm. It catalyses the reaction tRNA(Leu) + L-leucine + ATP = L-leucyl-tRNA(Leu) + AMP + diphosphate. This Solibacter usitatus (strain Ellin6076) protein is Leucine--tRNA ligase.